We begin with the raw amino-acid sequence, 335 residues long: Foldase protein PrsA (335 aa).

Positions 1-20 (MKKKIFAGAVTLLSVAVLAA) are cleaved as a signal peptide. Cysteine 21 carries the N-palmitoyl cysteine lipid modification. Residue cysteine 21 is the site of S-diacylglycerol cysteine attachment. One can recognise a PpiC domain in the interval 142-239 (TPEVTAQIIK…ASYYIVKLVK (98 aa)). The disordered stretch occupies residues 300–335 (TGSSTSSSSAASSSKTSESSSAAESSSKEASSSAAE). Low complexity predominate over residues 302 to 335 (SSTSSSSAASSSKTSESSSAAESSSKEASSSAAE).

It belongs to the PrsA family.

It localises to the cell membrane. It catalyses the reaction [protein]-peptidylproline (omega=180) = [protein]-peptidylproline (omega=0). In terms of biological role, plays a major role in protein secretion by helping the post-translocational extracellular folding of several secreted proteins. The protein is Foldase protein PrsA of Streptococcus sanguinis (strain SK36).